A 418-amino-acid polypeptide reads, in one-letter code: Beta-arrestin-1 (418 aa).

Residues 1-163 (MGDKGTRVFK…LEEKIHKRNS (163 aa)) form an interaction with SRC region. The tract at residues 45–86 (PEYLKERRVYVTLTCAFRYGREDLDVLGLTFRKDLFVANVQS) is interaction with CHRM2. Tyr47 bears the Phosphotyrosine mark. The 1D-myo-inositol hexakisphosphate site is built by Lys250, Met255, Lys324, and Lys326. Positions 318 to 418 (IVSYKVKVKL…GTGSPHLNNR (101 aa)) are interaction with TRAF6. Disordered stretches follow at residues 353 to 375 (HPKP…VDTN) and 397 to 418 (KGMK…LNNR). Positions 355-366 (KPKEEPPHREVP) are enriched in basic and acidic residues. Ser412 is modified (phosphoserine).

Belongs to the arrestin family. In terms of assembly, monomer. Homodimer. Homooligomer; the self-association is mediated by InsP6-binding. Heterooligomer with ARRB2; the association is mediated by InsP6-binding. Interacts with ADRB2 (phosphorylated). Interacts with CHRM2 (phosphorylated). Interacts with LHCGR. Interacts with CYTH2 and CASR. Interacts with AP2B1 (dephosphorylated); phosphorylation of AP2B1 disrupts the interaction. Interacts (dephosphorylated at Ser-412) with CLTC. Interacts with CCR2 and GRK2. Interacts with CRR5. Interacts with PTAFR (phosphorylated on serine residues). Interacts with CLTC and MAP2K3. Interacts with CREB1. Interacts with TRAF6. Interacts with IGF1R and MDM2. Interacts with C5AR1. Interacts with PDE4D. Interacts with SRC (via the SH3 domain and the protein kinase domain); the interaction is independent of the phosphorylation state of SRC C-terminus. Interacts with TACR1. Interacts with RAF1. Interacts with DVL1; the interaction is enhanced by phosphorylation of DVL1. Interacts with DVL2; the interaction is enhanced by phosphorylation of DVL2. Interacts with IGF1R. Interacts with CHUK, IKBKB and MAP3K14. Associates with MAP kinase p38. Part of a MAPK signaling complex consisting of TACR1, ARRB1, SRC, MAPK1 (activated) and MAPK3 (activated). Part of a MAPK signaling complex consisting of F2RL1, ARRB1, RAF1, MAPK1 (activated) and MAPK3 (activated). Interacts with GPR143. Interacts with MAP2K4/MKK4. Interacts with HCK and CXCR1 (phosphorylated). Interacts with ACKR3 and ACKR4. Interacts with ARRDC1; the interaction is direct. Interacts with GPR61, GPR62 and GPR135. In terms of processing, constitutively phosphorylated at in the cytoplasm. At the plasma membrane, is rapidly dephosphorylated, a process that is required for clathrin binding and ADRB2 endocytosis but not for ADRB2 binding and desensitization. Once internalized, is rephosphorylated. Post-translationally, the ubiquitination status appears to regulate the formation and trafficking of beta-arrestin-GPCR complexes and signaling. Ubiquitination appears to occur GPCR-specific. Ubiquitinated by MDM2; the ubiquitination is required for rapid internalization of ADRB2. Deubiquitinated by USP33; the deubiquitination leads to a dissociation of the beta-arrestin-GPCR complex. Stimulation of a class A GPCR, such as ADRB2, induces transient ubiquitination and subsequently promotes association with USP33.

The protein localises to the cytoplasm. Its subcellular location is the nucleus. The protein resides in the cell membrane. It is found in the membrane. It localises to the clathrin-coated pit. The protein localises to the cell projection. Its subcellular location is the pseudopodium. The protein resides in the cytoplasmic vesicle. Its function is as follows. Functions in regulating agonist-mediated G-protein coupled receptor (GPCR) signaling by mediating both receptor desensitization and resensitization processes. During homologous desensitization, beta-arrestins bind to the GPRK-phosphorylated receptor and sterically preclude its coupling to the cognate G-protein; the binding appears to require additional receptor determinants exposed only in the active receptor conformation. The beta-arrestins target many receptors for internalization by acting as endocytic adapters (CLASPs, clathrin-associated sorting proteins) and recruiting the GPRCs to the adapter protein 2 complex 2 (AP-2) in clathrin-coated pits (CCPs). However, the extent of beta-arrestin involvement appears to vary significantly depending on the receptor, agonist and cell type. Internalized arrestin-receptor complexes traffic to intracellular endosomes, where they remain uncoupled from G-proteins. Two different modes of arrestin-mediated internalization occur. Class A receptors, like ADRB2, OPRM1, ENDRA, D1AR and ADRA1B dissociate from beta-arrestin at or near the plasma membrane and undergo rapid recycling. Class B receptors, like AVPR2, AGTR1, NTSR1, TRHR and TACR1 internalize as a complex with arrestin and traffic with it to endosomal vesicles, presumably as desensitized receptors, for extended periods of time. Receptor resensitization then requires that receptor-bound arrestin is removed so that the receptor can be dephosphorylated and returned to the plasma membrane. Involved in internalization of P2RY4 and UTP-stimulated internalization of P2RY2. Involved in phosphorylation-dependent internalization of OPRD1 ands subsequent recycling. Involved in the degradation of cAMP by recruiting cAMP phosphodiesterases to ligand-activated receptors. Beta-arrestins function as multivalent adapter proteins that can switch the GPCR from a G-protein signaling mode that transmits short-lived signals from the plasma membrane via small molecule second messengers and ion channels to a beta-arrestin signaling mode that transmits a distinct set of signals that are initiated as the receptor internalizes and transits the intracellular compartment. Acts as a signaling scaffold for MAPK pathways such as MAPK1/3 (ERK1/2). ERK1/2 activated by the beta-arrestin scaffold is largely excluded from the nucleus and confined to cytoplasmic locations such as endocytic vesicles, also called beta-arrestin signalosomes. Recruits c-Src/SRC to ADRB2 resulting in ERK activation. GPCRs for which the beta-arrestin-mediated signaling relies on both ARRB1 and ARRB2 (codependent regulation) include ADRB2, F2RL1 and PTH1R. For some GPCRs the beta-arrestin-mediated signaling relies on either ARRB1 or ARRB2 and is inhibited by the other respective beta-arrestin form (reciprocal regulation). Inhibits ERK1/2 signaling in AGTR1- and AVPR2-mediated activation (reciprocal regulation). Is required for SP-stimulated endocytosis of NK1R and recruits c-Src/SRC to internalized NK1R resulting in ERK1/2 activation, which is required for the antiapoptotic effects of SP. Is involved in proteinase-activated F2RL1-mediated ERK activity. Acts as a signaling scaffold for the AKT1 pathway. Is involved in alpha-thrombin-stimulated AKT1 signaling. Is involved in IGF1-stimulated AKT1 signaling leading to increased protection from apoptosis. Involved in activation of the p38 MAPK signaling pathway and in actin bundle formation. Involved in F2RL1-mediated cytoskeletal rearrangement and chemotaxis. Involved in AGTR1-mediated stress fiber formation by acting together with GNAQ to activate RHOA. Appears to function as signaling scaffold involved in regulation of MIP-1-beta-stimulated CCR5-dependent chemotaxis. Involved in attenuation of NF-kappa-B-dependent transcription in response to GPCR or cytokine stimulation by interacting with and stabilizing CHUK. May serve as nuclear messenger for GPCRs. Involved in OPRD1-stimulated transcriptional regulation by translocating to CDKN1B and FOS promoter regions and recruiting EP300 resulting in acetylation of histone H4. Involved in regulation of LEF1 transcriptional activity via interaction with DVL1 and/or DVL2 Also involved in regulation of receptors other than GPCRs. Involved in Toll-like receptor and IL-1 receptor signaling through the interaction with TRAF6 which prevents TRAF6 autoubiquitination and oligomerization required for activation of NF-kappa-B and JUN. Involved in IL8-mediated granule release in neutrophils. Binds phosphoinositides. Binds inositolhexakisphosphate (InsP6). Required for atypical chemokine receptor ACKR2-induced RAC1-LIMK1-PAK1-dependent phosphorylation of cofilin (CFL1) and for the up-regulation of ACKR2 from endosomal compartment to cell membrane, increasing its efficiency in chemokine uptake and degradation. Involved in the internalization of the atypical chemokine receptor ACKR3. Negatively regulates the NOTCH signaling pathway by mediating the ubiquitination and degradation of NOTCH1 by ITCH. Participates in the recruitment of the ubiquitin-protein ligase to the receptor. This chain is Beta-arrestin-1 (Arrb1), found in Mus musculus (Mouse).